The following is a 160-amino-acid chain: Major strawberry allergen Fra a 1.05 (160 aa).

This sequence belongs to the BetVI family. Phosphorylated in vivo. Phosphorylation prevents its activity as ribonuclease.

In terms of biological role, possesses ribonuclease activity in vitro. The chain is Major strawberry allergen Fra a 1.05 from Fragaria ananassa (Strawberry).